The primary structure comprises 308 residues: Oxygen-dependent coproporphyrinogen-III oxidase (308 aa).

S100 lines the substrate pocket. Residues H104 and H114 each coordinate a divalent metal cation. The active-site Proton donor is H114. A substrate-binding site is contributed by 116-118; sequence NFR. 2 residues coordinate a divalent metal cation: H153 and H183. The interval 248–283 is important for dimerization; sequence YVEFNLVFDRGTIFGLQSGGRTESILSSMPPMATWK. 266–268 contributes to the substrate binding site; sequence GGR.

This sequence belongs to the aerobic coproporphyrinogen-III oxidase family. Homodimer. A divalent metal cation serves as cofactor.

The protein resides in the cytoplasm. The catalysed reaction is coproporphyrinogen III + O2 + 2 H(+) = protoporphyrinogen IX + 2 CO2 + 2 H2O. Its pathway is porphyrin-containing compound metabolism; protoporphyrin-IX biosynthesis; protoporphyrinogen-IX from coproporphyrinogen-III (O2 route): step 1/1. Its function is as follows. Involved in the heme biosynthesis. Catalyzes the aerobic oxidative decarboxylation of propionate groups of rings A and B of coproporphyrinogen-III to yield the vinyl groups in protoporphyrinogen-IX. This is Oxygen-dependent coproporphyrinogen-III oxidase from Francisella philomiragia subsp. philomiragia (strain ATCC 25017 / CCUG 19701 / FSC 153 / O#319-036).